Reading from the N-terminus, the 194-residue chain is Histone H1.0 (194 aa).

N-acetylmethionine is present on Met-1. A compositionally biased stretch (low complexity) spans Met-1–Ala-11. The interval Met-1–Tyr-28 is disordered. Residue Thr-2 is modified to N-acetylthreonine; in Histone H1.0, N-terminally processed. One can recognise an H15 domain in the interval Asp-24 to Lys-97. Arg-42 carries the citrulline modification. Residues Gly-86–Lys-194 are disordered. At Ser-104 the chain carries ADP-ribosylserine. Over residues Val-105–Lys-194 the composition is skewed to basic residues.

The protein belongs to the histone H1/H5 family. Post-translationally, ADP-ribosylated on Ser-104 in response to DNA damage.

The protein resides in the nucleus. It localises to the chromosome. In terms of biological role, histones H1 are necessary for the condensation of nucleosome chains into higher-order structures. The histones H1.0 are found in cells that are in terminal stages of differentiation or that have low rates of cell division. In Mus musculus (Mouse), this protein is Histone H1.0 (H1-0).